A 196-amino-acid polypeptide reads, in one-letter code: SAGA-associated factor 11 homolog (196 aa).

The SGF11-type zinc finger occupies 102–123 (CTCPNCDRLVAAARFAPHLEKC). The tract at residues 140-196 (TKEGTSASSNSSYVHSGANAGGTDDEDDVDWSSDKRKKKSTQNSRNNGSKKNNGKTF) is disordered. Polar residues predominate over residues 142–153 (EGTSASSNSSYV). Residue S172 is modified to Phosphoserine. Over residues 182 to 196 (NSRNNGSKKNNGKTF) the composition is skewed to low complexity.

Belongs to the SGF11 family. As to quaternary structure, component of some SAGA transcription coactivator-HAT complexes, at least composed of Ada2b, not/nonstop, Pcaf/Gcn5, Sgf11 and Spt3. Within the SAGA complex, Sgf11, e(y)2, and not/nonstop form an additional subcomplex of SAGA called the DUB module (deubiquitination module). Interacts directly with not/nonstop. Interacts with the AMEX complex component xmas-2. Interacts with Cbp80; important for promoter recruitment of Sgf11 that is not associated with the DUB module.

The protein localises to the nucleus. The protein resides in the nucleoplasm. Its subcellular location is the cytoplasm. In terms of biological role, component of the transcription regulatory histone acetylation (HAT) complex SAGA, a multiprotein complex that activates transcription by remodeling chromatin and mediating histone acetylation and deubiquitination. Within the SAGA complex, participates in a subcomplex that specifically deubiquitinates histone H2B. The SAGA complex is recruited to specific gene promoters by activators, where it is required for transcription. Required for nuclear receptor-mediated transactivation. Binds independently on SAGA to promoters in an RNA-dependent manner. Binds to mRNA and is essential for total mRNA export from the nucleus. Required to counteract heterochromatin silencing. Controls the development of neuronal connectivity in visual system by being required for accurate axon targeting in the optic lobe. Required for expression of ecdysone-induced genes such as br/broad. The chain is SAGA-associated factor 11 homolog from Drosophila persimilis (Fruit fly).